A 455-amino-acid chain; its full sequence is tRNA modification GTPase MnmE (455 aa).

Arg-24, Glu-81, and Lys-120 together coordinate (6S)-5-formyl-5,6,7,8-tetrahydrofolate. In terms of domain architecture, TrmE-type G spans 216 to 378 (GMTVVIAGRP…LREHLKACMG (163 aa)). Residue Asn-226 participates in K(+) binding. GTP-binding positions include 226–231 (NAGKSS), 245–251 (TDIAGTT), 270–273 (DTAG), and 335–338 (NKAD). Ser-230 is a Mg(2+) binding site. Residues Thr-245, Ile-247, and Thr-250 each contribute to the K(+) site. Thr-251 is a binding site for Mg(2+). Residue Lys-455 participates in (6S)-5-formyl-5,6,7,8-tetrahydrofolate binding.

This sequence belongs to the TRAFAC class TrmE-Era-EngA-EngB-Septin-like GTPase superfamily. TrmE GTPase family. Homodimer. Heterotetramer of two MnmE and two MnmG subunits. The cofactor is K(+).

The protein resides in the cytoplasm. In terms of biological role, exhibits a very high intrinsic GTPase hydrolysis rate. Involved in the addition of a carboxymethylaminomethyl (cmnm) group at the wobble position (U34) of certain tRNAs, forming tRNA-cmnm(5)s(2)U34. The protein is tRNA modification GTPase MnmE of Ectopseudomonas mendocina (strain ymp) (Pseudomonas mendocina).